A 775-amino-acid chain; its full sequence is ATP-dependent 6-phosphofructokinase 2 (775 aa).

Positions 1–390 are N-terminal catalytic PFK domain 1; the sequence is MTNTILDTYS…YHSAYRHLNT (390 aa). ATP contacts are provided by residues glycine 25, 88-89, and 118-121; these read RC and GDGS. Aspartate 119 is a binding site for Mg(2+). Residues 164 to 166, arginine 201, 208 to 210, glutamate 264, arginine 292, and 298 to 301 contribute to the substrate site; these read SID, MGR, and HIQR. Residue aspartate 166 is the Proton acceptor of the active site. Residues 391-404 are interdomain linker; sequence SDHPKMVLPEDKRM. The segment at 405 to 775 is C-terminal regulatory PFK domain 2; it reads RVAIIHVGAP…GRSSLYAIPN (371 aa). Beta-D-fructose 2,6-bisphosphate contacts are provided by residues 537-541, 582-584, aspartate 640, and 672-675; these read SMSNN, QGA, and HFQQ.

It belongs to the phosphofructokinase type A (PFKA) family. ATP-dependent PFK group I subfamily. Eukaryotic two domain clade 'E' sub-subfamily. Homotetramer. Mg(2+) serves as cofactor.

The protein resides in the cytoplasm. It catalyses the reaction beta-D-fructose 6-phosphate + ATP = beta-D-fructose 1,6-bisphosphate + ADP + H(+). The protein operates within carbohydrate degradation; glycolysis; D-glyceraldehyde 3-phosphate and glycerone phosphate from D-glucose: step 3/4. Its activity is regulated as follows. Allosterically activated by ADP, AMP, or fructose 2,6-bisphosphate, and allosterically inhibited by ATP or citrate. Catalyzes the phosphorylation of D-fructose 6-phosphate to fructose 1,6-bisphosphate by ATP, the first committing step of glycolysis. This chain is ATP-dependent 6-phosphofructokinase 2 (pfkB), found in Aspergillus oryzae (strain ATCC 42149 / RIB 40) (Yellow koji mold).